Consider the following 336-residue polypeptide: Adenosine deaminase (336 aa).

The Zn(2+) site is built by His15 and His17. Substrate contacts are provided by His17, Asp19, and Gly172. His199 contributes to the Zn(2+) binding site. The active-site Proton donor is the Glu202. Zn(2+) is bound at residue Asp279.

Belongs to the metallo-dependent hydrolases superfamily. Adenosine and AMP deaminases family. Adenosine deaminase subfamily. Requires Zn(2+) as cofactor.

It catalyses the reaction adenosine + H2O + H(+) = inosine + NH4(+). The enzyme catalyses 2'-deoxyadenosine + H2O + H(+) = 2'-deoxyinosine + NH4(+). Its function is as follows. Catalyzes the hydrolytic deamination of adenosine and 2-deoxyadenosine. The sequence is that of Adenosine deaminase from Streptococcus thermophilus (strain ATCC BAA-491 / LMD-9).